The primary structure comprises 284 residues: Nucleotide-binding protein in ptsO 5'region (284 aa).

ATP is bound at residue 8-15 (GRSGSGKS). 60-63 (DARN) serves as a coordination point for GTP.

It belongs to the RapZ-like family.

Functionally, displays ATPase and GTPase activities. This is Nucleotide-binding protein in ptsO 5'region from Pseudomonas putida (Arthrobacter siderocapsulatus).